Reading from the N-terminus, the 497-residue chain is Protein FAM114A2 (497 aa).

Residues 1-54 (MSDKDPPESPVVTGVASTLKDENCEPVEKPEDKSQPVVSTRKRPETKPSSDLEA) form a disordered region. A compositionally biased stretch (basic and acidic residues) spans 19–34 (LKDENCEPVEKPEDKS). A phosphoserine mark is found at serine 84 and serine 205. Residues 344-364 (VAEKEEGEKESEAGNTEEAQK) form a disordered region.

Belongs to the FAM114 family.

This is Protein FAM114A2 (Fam114a2) from Mus musculus (Mouse).